The sequence spans 333 residues: Fructose-1,6-bisphosphatase class 1 (333 aa).

Mg(2+)-binding residues include E92, D113, L115, and D116. Substrate is bound by residues 116-119 (DGSS), N209, Y242, and K272. Residue E278 coordinates Mg(2+).

Belongs to the FBPase class 1 family. In terms of assembly, homotetramer. Requires Mg(2+) as cofactor.

The protein localises to the cytoplasm. The catalysed reaction is beta-D-fructose 1,6-bisphosphate + H2O = beta-D-fructose 6-phosphate + phosphate. It functions in the pathway carbohydrate biosynthesis; Calvin cycle. This chain is Fructose-1,6-bisphosphatase class 1, found in Pelodictyon phaeoclathratiforme (strain DSM 5477 / BU-1).